The chain runs to 573 residues: (R)-mandelonitrile lyase 3 (573 aa).

An N-terminal signal peptide occupies residues 1–27 (MVKSTMSAVLLVLHIFVLHLQYSEVQS). N-linked (GlcNAc...) asparagine glycosylation is present at Asn30. 63–64 (TA) provides a ligand contact to FAD. Asn75 carries N-linked (GlcNAc...) asparagine glycosylation. FAD contacts are provided by residues 82–83 (ER), Val129, Thr133, and 137–140 (NAGV). N-linked (GlcNAc...) asparagine glycosylation is found at Asn145, Asn150, Asn162, and Asn218. Residue Val244 participates in FAD binding. N-linked (GlcNAc...) asparagine glycosylation is found at Asn252, Asn267, and Asn309. Cys356 is a substrate binding site. Asn380, Asn402, Asn420, and Asn467 each carry an N-linked (GlcNAc...) asparagine glycan. Cys427 and Cys478 form a disulfide bridge. Residue Tyr485 participates in substrate binding. FAD contacts are provided by residues 486–487 (WH) and Gly515. His487 acts as the Proton donor in catalysis. The active-site Proton acceptor is the His525. 526–527 (PQ) contacts FAD.

Belongs to the GMC oxidoreductase family. In terms of assembly, monomer. FAD serves as cofactor.

It is found in the vacuole. Its subcellular location is the aleurone grain. It catalyses the reaction (R)-mandelonitrile = benzaldehyde + hydrogen cyanide. Involved in cyanogenesis, the release of HCN from injured tissues. Catalyzes the stereospecific addition of HCN to a variety of aldehydes in vitro. It is a major seed constituent, and could have the additional role of a storage form for reduced nitrogen. The sequence is that of (R)-mandelonitrile lyase 3 (MDL3) from Prunus serotina (Black cherry).